We begin with the raw amino-acid sequence, 30 residues long: GLPCGESCVFIPCITTVVGCSCKNKVCYND.

The cyclopeptide (Gly-Asp) cross-link spans 1–30; that stretch reads GLPCGESCVFIPCITTVVGCSCKNKVCYND. 3 cysteine pairs are disulfide-bonded: cysteine 4–cysteine 20, cysteine 8–cysteine 22, and cysteine 13–cysteine 27.

Contains 3 disulfide bonds. In terms of processing, this is a cyclic peptide.

Functionally, probably participates in a plant defense mechanism. In Clitoria ternatea (Butterfly pea), this protein is Cyclotide cter-H.